The chain runs to 467 residues: Involucrin (467 aa).

The interval 48–467 (EIQEKGFPKH…ELENRTQQEK (420 aa)) is disordered. Residues 49-75 (IQEKGFPKHEEKRPNPVKDLPDQKCEH) are compositionally biased toward basic and acidic residues. Composition is skewed to low complexity over residues 76–95 (QQQPGPQKQQLQVKKSQQEL) and 105–177 (QQLP…VPQE). Composition is skewed to basic and acidic residues over residues 178–192 (LHLRQHQEKLQDPEL) and 220–231 (RHQEPQEQELHL). The segment covering 278 to 290 (QQQQESPEPELQL) has biased composition (low complexity). Basic and acidic residues-rich tracts occupy residues 295 to 318 (QSHEPDMAGDQKEKQKLHKPELYL), 348 to 373 (LEEKQHQKPPEPELHLGKQQESHEPD), 380 to 391 (EKQKLGEPELHL), 415 to 437 (KQEKASREQQLDYSHLEQEKELS), and 450 to 467 (KQLERKKHELENRTQQEK).

Belongs to the involucrin family. Directly or indirectly cross-linked to cornifelin (CNFN). In terms of processing, substrate of transglutaminase. Specific glutamines or lysines are cross-linked to keratins, desmoplakin and to inter involucrin molecules. Keratinocytes of epidermis and other stratified squamous epithelia.

It localises to the cytoplasm. Functionally, part of the insoluble cornified cell envelope (CE) of stratified squamous epithelia. The protein is Involucrin (Ivl) of Mus musculus (Mouse).